The primary structure comprises 402 residues: Tyrosine-protein kinase transforming protein ros (402 aa).

The 280-residue stretch at 98 to 377 folds into the Protein kinase domain; it reads LNLHKLLGSG…KLQEIRHSPL (280 aa). ATP is bound by residues 104-112 and lysine 133; that span reads LGSGAFGEV. Aspartate 232 serves as the catalytic Proton acceptor. Tyrosine 268 is modified (phosphotyrosine; by autocatalysis).

Belongs to the protein kinase superfamily. Tyr protein kinase family. Insulin receptor subfamily.

The enzyme catalyses L-tyrosyl-[protein] + ATP = O-phospho-L-tyrosyl-[protein] + ADP + H(+). This Galliformes (UR2SV) protein is Tyrosine-protein kinase transforming protein ros (V-ROS).